The sequence spans 412 residues: Serine hydroxymethyltransferase (412 aa).

Residues leucine 112 and 116–118 (GHL) contribute to the (6S)-5,6,7,8-tetrahydrofolate site. An N6-(pyridoxal phosphate)lysine modification is found at lysine 221. Glutamate 237 serves as a coordination point for (6S)-5,6,7,8-tetrahydrofolate.

This sequence belongs to the SHMT family. As to quaternary structure, homodimer. It depends on pyridoxal 5'-phosphate as a cofactor.

The protein resides in the cytoplasm. It catalyses the reaction (6R)-5,10-methylene-5,6,7,8-tetrahydrofolate + glycine + H2O = (6S)-5,6,7,8-tetrahydrofolate + L-serine. It participates in one-carbon metabolism; tetrahydrofolate interconversion. Its pathway is amino-acid biosynthesis; glycine biosynthesis; glycine from L-serine: step 1/1. In terms of biological role, catalyzes the reversible interconversion of serine and glycine with tetrahydrofolate (THF) serving as the one-carbon carrier. This reaction serves as the major source of one-carbon groups required for the biosynthesis of purines, thymidylate, methionine, and other important biomolecules. Also exhibits THF-independent aldolase activity toward beta-hydroxyamino acids, producing glycine and aldehydes, via a retro-aldol mechanism. The chain is Serine hydroxymethyltransferase from Malacoplasma penetrans (strain HF-2) (Mycoplasma penetrans).